A 361-amino-acid chain; its full sequence is G-protein coupled receptor 52 (361 aa).

Over 1–44 the chain is Extracellular; that stretch reads MNDSRWTEWRILNTSSGILNVSERHSCPLGFGHYSAVDVCIFET. N-linked (GlcNAc...) asparagine glycosylation is found at asparagine 2, asparagine 13, and asparagine 20. Residues 45 to 65 traverse the membrane as a helical segment; that stretch reads IVIVLLTFLIIAGNLTVIFVF. Topologically, residues 66–87 are cytoplasmic; sequence HCAPLLHHYTTSYFIQTMAYAD. A helical transmembrane segment spans residues 88–108; that stretch reads LFVGVSCLVPTLSLLHYSTGI. The Extracellular segment spans residues 109 to 115; sequence HESLTCQ. Residues cysteine 114 and cysteine 193 are joined by a disulfide bond. A helical transmembrane segment spans residues 116 to 136; it reads VFGYIISVLKSVSMACLACIS. The Cytoplasmic portion of the chain corresponds to 137–159; that stretch reads VDRYLAITKPLSYNQLVTPCRLR. A helical transmembrane segment spans residues 160-180; it reads ICIILIWIYSCLIFLPSFFGW. The Extracellular segment spans residues 181–200; the sequence is GKPGYHGDIFEWCATSWLTS. The chain crosses the membrane as a helical span at residues 201-221; it reads AYFTGFIVCLLYAPAALVVCF. Residues 222–265 are Cytoplasmic-facing; that stretch reads TYFHIFKICRQHTKEINDRRARFPSHEAAASRDAGHSPDRRYAM. Residues 266–286 form a helical membrane-spanning segment; the sequence is VLFRITSVFYMLWLPYIIYFL. The Extracellular portion of the chain corresponds to 287-296; that stretch reads LESSRVLDNP. A helical membrane pass occupies residues 297-317; the sequence is TLSFLTTWLAISNSFCNCVIY. Residues 318-361 are Cytoplasmic-facing; sequence SLSNSVFRLGLRRLSETMCTSCMCVKDKEARDPKPRKRANSCSI.

This sequence belongs to the G-protein coupled receptor 1 family.

It is found in the cell membrane. G- protein coupled receptor activated by antipsychotics reserpine leading to an increase in intracellular cAMP and its internalization. May play a role in locomotor activity through modulation of dopamine, NMDA and ADORA2A-induced locomotor activity. These behavioral changes are accompanied by modulation of the dopamine receptor signaling pathway in striatum. Modulates HTT level via cAMP-dependent but PKA independent mechanisms throught activation of RAB39B that translocates HTT to the endoplasmic reticulum, thus avoiding proteasome degradation. The chain is G-protein coupled receptor 52 from Bos taurus (Bovine).